A 545-amino-acid polypeptide reads, in one-letter code: Methionine--tRNA ligase (545 aa).

The short motif at 13–23 is the 'HIGH' region element; the sequence is PYANGEIHLGH. Residues cysteine 144, cysteine 147, cysteine 157, and cysteine 160 each contribute to the Zn(2+) site. Residues 329–333 carry the 'KMSKS' region motif; sequence KMSKS. Lysine 332 serves as a coordination point for ATP.

Belongs to the class-I aminoacyl-tRNA synthetase family. MetG type 1 subfamily. In terms of assembly, monomer. It depends on Zn(2+) as a cofactor.

The protein localises to the cytoplasm. The enzyme catalyses tRNA(Met) + L-methionine + ATP = L-methionyl-tRNA(Met) + AMP + diphosphate. Functionally, is required not only for elongation of protein synthesis but also for the initiation of all mRNA translation through initiator tRNA(fMet) aminoacylation. In Vesicomyosocius okutanii subsp. Calyptogena okutanii (strain HA), this protein is Methionine--tRNA ligase.